Consider the following 398-residue polypeptide: Chalcone synthase 1 (398 aa).

58-65 (KFKRMCDK) provides a ligand contact to CoA. Residue C167 is the Acyl-thioester intermediate of the active site. Substrate-binding positions include T200 and 219-220 (GD). A311 serves as a coordination point for CoA.

The protein belongs to the thiolase-like superfamily. Chalcone/stilbene synthases family. In terms of assembly, homodimer.

It carries out the reaction (E)-4-coumaroyl-CoA + 3 malonyl-CoA + 3 H(+) = 2',4,4',6'-tetrahydroxychalcone + 3 CO2 + 4 CoA. Its pathway is secondary metabolite biosynthesis; flavonoid biosynthesis. The primary product of this enzyme is 4,2',4',6'-tetrahydroxychalcone (also termed naringenin-chalcone or chalcone) which can under specific conditions spontaneously isomerize into naringenin. The protein is Chalcone synthase 1 (CHS1) of Oryza sativa subsp. indica (Rice).